A 790-amino-acid chain; its full sequence is uncharacterized protein (790 aa).

The region spanning 37–172 is the TBDR plug domain; it reads APVPVPVNGN…NGGVIDAKIK (136 aa). Positions 178–790 constitute a TBDR beta-barrel domain; sequence DSKVKLGYRT…TFWLDVSMKF (613 aa).

It belongs to the TonB-dependent receptor family.

The protein resides in the cell outer membrane. This is an uncharacterized protein from Escherichia coli (strain K12).